Here is a 202-residue protein sequence, read N- to C-terminus: LexA repressor 2 (202 aa).

A DNA-binding region (H-T-H motif) is located at residues 28–48; the sequence is LAEISEAFGFASRSVARKHIV. Catalysis depends on for autocatalytic cleavage activity residues S123 and K160.

This sequence belongs to the peptidase S24 family. As to quaternary structure, homodimer.

The enzyme catalyses Hydrolysis of Ala-|-Gly bond in repressor LexA.. Represses a number of genes involved in the response to DNA damage (SOS response), including recA and lexA. In the presence of single-stranded DNA, RecA interacts with LexA causing an autocatalytic cleavage which disrupts the DNA-binding part of LexA, leading to derepression of the SOS regulon and eventually DNA repair. The polypeptide is LexA repressor 2 (Pseudomonas syringae pv. tomato (strain ATCC BAA-871 / DC3000)).